The following is a 472-amino-acid chain: UDP-N-acetylmuramate--L-alanine ligase (472 aa).

122–128 (GSHGKTT) is an ATP binding site.

The protein belongs to the MurCDEF family.

The protein localises to the cytoplasm. It catalyses the reaction UDP-N-acetyl-alpha-D-muramate + L-alanine + ATP = UDP-N-acetyl-alpha-D-muramoyl-L-alanine + ADP + phosphate + H(+). It functions in the pathway cell wall biogenesis; peptidoglycan biosynthesis. Its function is as follows. Cell wall formation. The polypeptide is UDP-N-acetylmuramate--L-alanine ligase (Myxococcus xanthus (strain DK1622)).